The primary structure comprises 211 residues: Protein-L-isoaspartate O-methyltransferase (211 aa).

Serine 62 is an active-site residue.

Belongs to the methyltransferase superfamily. L-isoaspartyl/D-aspartyl protein methyltransferase family.

Its subcellular location is the cytoplasm. It carries out the reaction [protein]-L-isoaspartate + S-adenosyl-L-methionine = [protein]-L-isoaspartate alpha-methyl ester + S-adenosyl-L-homocysteine. Catalyzes the methyl esterification of L-isoaspartyl residues in peptides and proteins that result from spontaneous decomposition of normal L-aspartyl and L-asparaginyl residues. It plays a role in the repair and/or degradation of damaged proteins. The protein is Protein-L-isoaspartate O-methyltransferase of Shewanella sp. (strain ANA-3).